A 359-amino-acid polypeptide reads, in one-letter code: Guanine nucleotide-binding protein subunit alpha-11 (359 aa).

Residues Cys-9 and Cys-10 are each lipidated (S-palmitoyl cysteine). The G-alpha domain maps to 38–359 (RELKLLLLGT…QLNLKEYNLV (322 aa)). Residues 41-54 (KLLLLGTGESGKST) form a G1 motif region. Residues 46–53 (GTGESGKS) and 180–183 (LRVR) each bind GTP. Residue Ser-53 coordinates Mg(2+). The tract at residues 178–186 (DVLRVRVPT) is G2 motif. Thr-186 is a Mg(2+) binding site. The segment at 201 to 210 (FRMVDVGGQR) is G3 motif. The interval 270 to 277 (ILFLNKKD) is G4 motif. GTP is bound by residues 274 to 277 (NKKD) and Ala-331. A G5 motif region spans residues 329–334 (TCATDT).

This sequence belongs to the G-alpha family. G(q) subfamily. As to quaternary structure, g proteins are composed of 3 units; alpha, beta and gamma. The alpha chain contains the guanine nucleotide binding site. Interacts with RGS22. Interacts with NTSR1.

The protein resides in the cell membrane. It is found in the cytoplasm. It carries out the reaction GTP + H2O = GDP + phosphate + H(+). Functionally, guanine nucleotide-binding proteins (G proteins) function as transducers downstream of G protein-coupled receptors (GPCRs) in numerous signaling cascades. The alpha chain contains the guanine nucleotide binding site and alternates between an active, GTP-bound state and an inactive, GDP-bound state. Signaling by an activated GPCR promotes GDP release and GTP binding. The alpha subunit has a low GTPase activity that converts bound GTP to GDP, thereby terminating the signal. Both GDP release and GTP hydrolysis are modulated by numerous regulatory proteins. Signaling is mediated via phospholipase C-beta-dependent inositol lipid hydrolysis for signal propagation: activates phospholipase C-beta: following GPCR activation, GNA11 activates PLC-beta (PLCB1, PLCB2, PLCB3 or PLCB4), leading to production of diacylglycerol (DAG) and inositol 1,4,5-trisphosphate (IP3). Transduces FFAR4 signaling in response to long-chain fatty acids (LCFAs). Together with GNAQ, required for heart development. In the respiratory epithelium, transmits OXGR1-dependent signals that lead to downstream intracellular Ca(2+) release and mucocilliary clearance of airborne pathogens. The protein is Guanine nucleotide-binding protein subunit alpha-11 (Gna11) of Mus musculus (Mouse).